The chain runs to 291 residues: NAD kinase (291 aa).

Aspartate 72 functions as the Proton acceptor in the catalytic mechanism. NAD(+)-binding positions include 72–73 (DG), 146–147 (ND), arginine 157, arginine 174, aspartate 176, 187–192 (TAYSLS), and glutamine 247.

It belongs to the NAD kinase family. A divalent metal cation serves as cofactor.

The protein resides in the cytoplasm. The enzyme catalyses NAD(+) + ATP = ADP + NADP(+) + H(+). Its function is as follows. Involved in the regulation of the intracellular balance of NAD and NADP, and is a key enzyme in the biosynthesis of NADP. Catalyzes specifically the phosphorylation on 2'-hydroxyl of the adenosine moiety of NAD to yield NADP. In Hydrogenovibrio crunogenus (strain DSM 25203 / XCL-2) (Thiomicrospira crunogena), this protein is NAD kinase.